A 478-amino-acid polypeptide reads, in one-letter code: Aspartyl/glutamyl-tRNA(Asn/Gln) amidotransferase subunit B (478 aa).

It belongs to the GatB/GatE family. GatB subfamily. Heterotrimer of A, B and C subunits.

It carries out the reaction L-glutamyl-tRNA(Gln) + L-glutamine + ATP + H2O = L-glutaminyl-tRNA(Gln) + L-glutamate + ADP + phosphate + H(+). It catalyses the reaction L-aspartyl-tRNA(Asn) + L-glutamine + ATP + H2O = L-asparaginyl-tRNA(Asn) + L-glutamate + ADP + phosphate + 2 H(+). In terms of biological role, allows the formation of correctly charged Asn-tRNA(Asn) or Gln-tRNA(Gln) through the transamidation of misacylated Asp-tRNA(Asn) or Glu-tRNA(Gln) in organisms which lack either or both of asparaginyl-tRNA or glutaminyl-tRNA synthetases. The reaction takes place in the presence of glutamine and ATP through an activated phospho-Asp-tRNA(Asn) or phospho-Glu-tRNA(Gln). This chain is Aspartyl/glutamyl-tRNA(Asn/Gln) amidotransferase subunit B, found in Alkalilimnicola ehrlichii (strain ATCC BAA-1101 / DSM 17681 / MLHE-1).